The primary structure comprises 77 residues: Homeodomain-only protein (77 aa).

Residues 7-65 constitute a DNA-binding region (homeobox; degenerate); the sequence is AALGVRLTEDQVKVLEENFTKVSKHPDETTLMLIAAECGLSEEQTAVWFRMRNAQWRKA.

Its subcellular location is the nucleus. It localises to the cytoplasm. Functionally, atypical homeodomain protein which does not bind DNA and is required to modulate cardiac growth and development. May act via an interaction with SRF, leading to modulate the expression of SRF-dependent cardiac-specific genes and cardiac development. May act as a co-chaperone for HSPA1A and HSPA1B chaperone proteins and assist in chaperone-mediated protein refolding. This is Homeodomain-only protein (hopx) from Danio rerio (Zebrafish).